The primary structure comprises 174 residues: Secreted cysteine-rich protein UMAG_00792 (174 aa).

The signal sequence occupies residues 1–26 (MVSFKSSSLFLHSLSALLVLTTLSSA). N77 carries an N-linked (GlcNAc...) asparagine glycan.

Secreted cysteine-rich proteins (SCRPs) are predicted to form amyloids.

Its subcellular location is the secreted. Its function is as follows. Secreted cysteine-rich protein that might form amyloid strutures which are involved in attachment to hydrophobic surfaces and in formation of hydrophobic aerial hyphae. The polypeptide is Secreted cysteine-rich protein UMAG_00792 (Mycosarcoma maydis (Corn smut fungus)).